We begin with the raw amino-acid sequence, 99 residues long: Nucleoid-associated protein EbfC (99 aa).

The protein belongs to the YbaB/EbfC family. Homodimer.

Its subcellular location is the cytoplasm. The protein localises to the nucleoid. Functionally, binds to DNA and alters its conformation. May be involved in regulation of gene expression, nucleoid organization and DNA protection. The sequence is that of Nucleoid-associated protein EbfC from Borrelia duttonii (strain Ly).